The primary structure comprises 159 residues: 16 kDa outer membrane lipoprotein (159 aa).

Positions 1–21 are cleaved as a signal peptide; that stretch reads MNKKIFTLFLVVAASAIFAVS. Cys22 carries N-palmitoyl cysteine lipidation. A lipid anchor (S-diacylglycerol cysteine) is attached at Cys22.

The protein localises to the cell outer membrane. The chain is 16 kDa outer membrane lipoprotein (smpA) from Brachyspira hyodysenteriae (Treponema hyodysenteriae).